The chain runs to 344 residues: Zinc metalloproteinase nas-6 (344 aa).

The N-terminal stretch at 1–19 is a signal peptide; it reads MLDHVLLLTYCLVSTVVRS. Positions 72-266 constitute a Peptidase M12A domain; that stretch reads NALKNKQLTW…VKINKLYSCK (195 aa). Intrachain disulfides connect C114-C265, C135-C154, C300-C334, C307-C327, and C314-C331. H162 lines the Zn(2+) pocket. E163 is a catalytic residue. H166 and H172 together coordinate Zn(2+). Residues 300–334 form the ShKT domain; the sequence is CVDHFADCPHFAQYCTRASFFFVMKSYCPFTCKHC.

It depends on Zn(2+) as a cofactor. In terms of tissue distribution, expressed in pharyngeal and body wall muscles, intestine, hypodermis and pharyngeal mc2 cells.

The protein resides in the secreted. In terms of biological role, metalloprotease. The protein is Zinc metalloproteinase nas-6 (nas-6) of Caenorhabditis elegans.